The sequence spans 77 residues: uncharacterized protein (77 aa).

This is an uncharacterized protein from Vaccinia virus (strain Copenhagen) (VACV).